Consider the following 435-residue polypeptide: GTPase Der (435 aa).

EngA-type G domains follow at residues 4–167 (PVVA…PAEK) and 175–350 (ISFS…DNQN). Residues 10 to 17 (GQPNVGKS), 57 to 61 (DTGGI), 119 to 122 (NKAD), 181 to 188 (GRPNVGKS), 228 to 232 (DTAGI), and 293 to 296 (NKWD) each bind GTP. A KH-like domain is found at 351 to 435 (QRIQSSVLND…PIKILPRKRK (85 aa)).

The protein belongs to the TRAFAC class TrmE-Era-EngA-EngB-Septin-like GTPase superfamily. EngA (Der) GTPase family. Associates with the 50S ribosomal subunit.

Functionally, GTPase that plays an essential role in the late steps of ribosome biogenesis. This is GTPase Der from Lactobacillus acidophilus (strain ATCC 700396 / NCK56 / N2 / NCFM).